Here is a 154-residue protein sequence, read N- to C-terminus: tRNA (cytidine(34)-2'-O)-methyltransferase (154 aa).

S-adenosyl-L-methionine-binding residues include Leu-78, Gly-100, Ile-122, and Ser-130.

It belongs to the class IV-like SAM-binding methyltransferase superfamily. RNA methyltransferase TrmH family. TrmL subfamily. In terms of assembly, homodimer.

The protein resides in the cytoplasm. It carries out the reaction cytidine(34) in tRNA + S-adenosyl-L-methionine = 2'-O-methylcytidine(34) in tRNA + S-adenosyl-L-homocysteine + H(+). The catalysed reaction is 5-carboxymethylaminomethyluridine(34) in tRNA(Leu) + S-adenosyl-L-methionine = 5-carboxymethylaminomethyl-2'-O-methyluridine(34) in tRNA(Leu) + S-adenosyl-L-homocysteine + H(+). Functionally, methylates the ribose at the nucleotide 34 wobble position in the two leucyl isoacceptors tRNA(Leu)(CmAA) and tRNA(Leu)(cmnm5UmAA). Catalyzes the methyl transfer from S-adenosyl-L-methionine to the 2'-OH of the wobble nucleotide. This chain is tRNA (cytidine(34)-2'-O)-methyltransferase, found in Saccharophagus degradans (strain 2-40 / ATCC 43961 / DSM 17024).